Reading from the N-terminus, the 287-residue chain is Thioredoxin-related transmembrane protein 2 (287 aa).

Residues methionine 1–serine 35 form the signal peptide. Topologically, residues phenylalanine 36 to methionine 112 are extracellular. The helical transmembrane segment at glycine 113 to leucine 133 threads the bilayer. The Cytoplasmic portion of the chain corresponds to glycine 134 to glutamine 287. A Thioredoxin domain is found at proline 135–lysine 269. A Di-lysine motif motif is present at residues lysine 284 to glutamine 287.

Monomer. Homodimer; disulfide-linked. Occurs in both reduced and oxidized monomeric form. Oxidative conditions increase homodimerization.

Its subcellular location is the endoplasmic reticulum membrane. It is found in the mitochondrion membrane. In terms of biological role, endoplasmic reticulum and mitochondria-associated protein that probably functions as a regulator of cellular redox state and thereby regulates protein post-translational modification, protein folding and mitochondrial activity. This is Thioredoxin-related transmembrane protein 2 (tmx2) from Xenopus tropicalis (Western clawed frog).